Here is a 98-residue protein sequence, read N- to C-terminus: UPF0473 protein LSL_1108 (98 aa).

Belongs to the UPF0473 family.

This Ligilactobacillus salivarius (strain UCC118) (Lactobacillus salivarius) protein is UPF0473 protein LSL_1108.